We begin with the raw amino-acid sequence, 1020 residues long: MGVPSFYRWLAEKYPLLVADVIEEEPVEIEGIKIPVDTSKPNPNNLEYDNLYLDMNGIIHPCFHPEDRPSPTTFEEVFQCMFDYIDRLFVMVRPRKLLYMAIDGVAPRAKMNQQRSRRFRSAKDASDAAAEEERLREEFEREGRRLPPKVDSQVFDSNVITPGTEFMGVLSIALQYYVHLRLNHDVGWKNIKVILSDANVPGEGEHKIMSYIRLQRNLPGFDPNTRHCLYGLDADLIMLGLATHEVHFSILREVVYTPGQQERCFLCGQMGHFASNCEGKPKKRAGESDEKGDGNDFVKKPYQFLHIWVLREYLELEMRIPNPPFEIDLERIVDDFIFICFFVGNDFLPHMPTLEIREGAINLLMAVYKKEFRSFDGYLTDGCKPNLKRVEQFIQAVGSFEDKIFQKRAMQHQRQAERVKRDKAGKATKRMDDEAPTVQPDLVPVARFSGSRLASAPTPSPFQSNDGRSAPHQKVRRLSPGSSVGAAIVDVENSLESDERENKEELKTKLKELIREKSDAFNSDTTEEDKVKLGQPGWRERYYEEKFSVVTPEEMERVRKDVVLKYTEGLCWVMHYYMEGVCSWQWFYPYHYAPFASDLKDLGEMDIKFELGTPFKPFNQLLGVFPAASSHALPERYRTLMTDPNSPIIDFYPTDFEVDMNGKRFSWQGIAKLPFIDERRLLEAVSEVEFTLTDEEKRRNSRMCDMLFIATSHRLAELVFSLDNHCRQLSARERVDFKVKIKPKLSDGMNGYLTPCSGETHPPVFRSPMEGMEDILTNQVICCIYRLPDAHEHITRPPPGVIFPKKTVDIGDLKPPPALWHEDNGRRPMHNNHGMHNNHGMHNNQGRQNPPGSVSGRHLGNAAHRLVSNSLQMGTDRYQTPTDVPAPGYGYNPPQYVPPIPYQHGGYMAPPGAQGYAQPAPYQNRGGYQPRGPSGRFPSEPYQSQSREGQHASRGGGYSGNHQNQHQQQQWHGQGGSEQNNPRGYNGQHHHQQGGDHDRRGRGRGSHHHHDQGGNPRHRY.

Residues 113-144 (QQRSRRFRSAKDASDAAAEEERLREEFEREGR) form a disordered region. Over residues 121–144 (SAKDASDAAAEEERLREEFEREGR) the composition is skewed to basic and acidic residues. The segment at 262-279 (ERCFLCGQMGHFASNCEG) adopts a CCHC-type zinc-finger fold. Disordered regions lie at residues 411–440 (QHQR…TVQP) and 452–483 (RLAS…PGSS). The span at 414–433 (RQAERVKRDKAGKATKRMDD) shows a compositional bias: basic and acidic residues. Residues 487-523 (AIVDVENSLESDERENKEELKTKLKELIREKSDAFNS) adopt a coiled-coil conformation. A compositionally biased stretch (low complexity) spans 831–844 (NNHGMHNNHGMHNN). Disordered stretches follow at residues 831–859 (NNHG…GRHL), 875–897 (TDRY…PQYV), and 911–1020 (PGAQ…RHRY). 2 stretches are compositionally biased toward low complexity: residues 911–923 (PGAQ…APYQ) and 960–972 (GNHQ…QQWH). Basic residues predominate over residues 1000 to 1020 (RGRGRGSHHHHDQGGNPRHRY).

This sequence belongs to the 5'-3' exonuclease family. XRN2/RAT1 subfamily. As to expression, expressed in roots, leaves, stems and flowers.

It is found in the nucleus. In terms of biological role, possesses 5'-&gt;3' exoribonuclease activity. Acts as an endogenous post-transcriptional gene silencing (PTGS) suppressor. Degrades miRNA-derived loops, excised during miRNA maturation in the nucleus. Required for proper development. Involved in pre-rRNA processing. Involved with XRN2 in the 5'-end exonucleolytic processing of 5.8S and 25S rRNAs. Contributes with XRN2 to polyadenylation-dependent nuclear RNA surveillance. Involved in the degradation of aberrant polyadenylated pre-rRNA through 5'-end processing. The sequence is that of 5'-3' exoribonuclease 3 from Arabidopsis thaliana (Mouse-ear cress).